The following is a 546-amino-acid chain: CTP synthase (546 aa).

An amidoligase domain region spans residues 1-266; the sequence is MTTNYIFVTG…DDLVCARFGI (266 aa). Ser14 serves as a coordination point for CTP. Ser14 is a UTP binding site. ATP is bound by residues 15–20 and Asp72; that span reads SLGKGI. Residues Asp72 and Glu140 each coordinate Mg(2+). CTP-binding positions include 147 to 149, 187 to 192, and Lys223; these read DIE and KTKPTQ. UTP-binding positions include 187 to 192 and Lys223; that span reads KTKPTQ. Residue 239 to 241 coordinates ATP; that stretch reads KDV. The region spanning 291–542 is the Glutamine amidotransferase type-1 domain; the sequence is TIGMVGKYIE…VKAAGQNARG (252 aa). Gly352 contributes to the L-glutamine binding site. Residue Cys379 is the Nucleophile; for glutamine hydrolysis of the active site. Residues 380–383, Glu403, and Arg470 each bind L-glutamine; that span reads LGMQ. Active-site residues include His515 and Glu517.

The protein belongs to the CTP synthase family. Homotetramer.

The catalysed reaction is UTP + L-glutamine + ATP + H2O = CTP + L-glutamate + ADP + phosphate + 2 H(+). It carries out the reaction L-glutamine + H2O = L-glutamate + NH4(+). The enzyme catalyses UTP + NH4(+) + ATP = CTP + ADP + phosphate + 2 H(+). It participates in pyrimidine metabolism; CTP biosynthesis via de novo pathway; CTP from UDP: step 2/2. Its activity is regulated as follows. Allosterically activated by GTP, when glutamine is the substrate; GTP has no effect on the reaction when ammonia is the substrate. The allosteric effector GTP functions by stabilizing the protein conformation that binds the tetrahedral intermediate(s) formed during glutamine hydrolysis. Inhibited by the product CTP, via allosteric rather than competitive inhibition. Catalyzes the ATP-dependent amination of UTP to CTP with either L-glutamine or ammonia as the source of nitrogen. Regulates intracellular CTP levels through interactions with the four ribonucleotide triphosphates. This is CTP synthase from Vibrio campbellii (strain ATCC BAA-1116).